Here is a 320-residue protein sequence, read N- to C-terminus: tRNA N6-adenosine threonylcarbamoyltransferase (320 aa).

Fe cation is bound by residues H114 and H118. Residues 136 to 140 (VVSGG), D169, G182, D186, and N273 contribute to the substrate site. D297 lines the Fe cation pocket.

It belongs to the KAE1 / TsaD family. Fe(2+) serves as cofactor.

The protein localises to the cytoplasm. The enzyme catalyses L-threonylcarbamoyladenylate + adenosine(37) in tRNA = N(6)-L-threonylcarbamoyladenosine(37) in tRNA + AMP + H(+). In terms of biological role, required for the formation of a threonylcarbamoyl group on adenosine at position 37 (t(6)A37) in tRNAs that read codons beginning with adenine. Is involved in the transfer of the threonylcarbamoyl moiety of threonylcarbamoyl-AMP (TC-AMP) to the N6 group of A37, together with TsaE and TsaB. TsaD likely plays a direct catalytic role in this reaction. This chain is tRNA N6-adenosine threonylcarbamoyltransferase, found in Ureaplasma urealyticum serovar 10 (strain ATCC 33699 / Western).